A 198-amino-acid chain; its full sequence is TATA-box-binding protein (198 aa).

Tandem repeats lie at residues 14–90 (IENI…IKTL) and 105–181 (IQNI…FDKL).

It belongs to the TBP family.

Functionally, general factor that plays a role in the activation of archaeal genes transcribed by RNA polymerase. Binds specifically to the TATA box promoter element which lies close to the position of transcription initiation. In Saccharolobus shibatae (strain ATCC 51178 / DSM 5389 / JCM 8931 / NBRC 15437 / B12) (Sulfolobus shibatae), this protein is TATA-box-binding protein.